The primary structure comprises 312 residues: Peptide methionine sulfoxide reductase MsrA/MsrB 1 (312 aa).

The segment at 1-155 is peptide methionine sulfoxide reductase; it reads MAEIYLAGGC…PSGYCHIDVT (155 aa). Cysteine 10 is an active-site residue. One can recognise a MsrB domain in the interval 172–295; the sequence is QEVLKASLSE…NSASLRFVAK (124 aa). Residue cysteine 284 is the Nucleophile of the active site.

This sequence in the N-terminal section; belongs to the MsrA Met sulfoxide reductase family. The protein in the C-terminal section; belongs to the MsrB Met sulfoxide reductase family.

Its subcellular location is the cell membrane. It carries out the reaction L-methionyl-[protein] + [thioredoxin]-disulfide + H2O = L-methionyl-(S)-S-oxide-[protein] + [thioredoxin]-dithiol. It catalyses the reaction [thioredoxin]-disulfide + L-methionine + H2O = L-methionine (S)-S-oxide + [thioredoxin]-dithiol. The catalysed reaction is L-methionyl-[protein] + [thioredoxin]-disulfide + H2O = L-methionyl-(R)-S-oxide-[protein] + [thioredoxin]-dithiol. Its function is as follows. Has an important function as a repair enzyme for proteins that have been inactivated by oxidation. Catalyzes the reversible oxidation-reduction of methionine sulfoxide in proteins to methionine. The polypeptide is Peptide methionine sulfoxide reductase MsrA/MsrB 1 (msrAB1) (Streptococcus pneumoniae serotype 4 (strain ATCC BAA-334 / TIGR4)).